The following is a 574-amino-acid chain: Pyruvate kinase PKLR (574 aa).

Phosphoserine is present on residues Ser-2, Ser-19, Ser-26, and Ser-43. Arg-116 contributes to the substrate binding site. Residues Asn-118, Ser-120, Asp-156, and Thr-157 each contribute to the K(+) site. Residue 118-121 (NFSH) participates in ATP binding. ATP contacts are provided by Arg-163 and Lys-250. Ser-292 bears the Phosphoserine mark. Lys-313 contributes to the substrate binding site. Residue Glu-315 participates in Mn(2+) binding. Substrate-binding residues include Gly-338, Asp-339, and Thr-371. Mn(2+) is bound at residue Asp-339. Beta-D-fructose 1,6-bisphosphate is bound by residues 475 to 480 (TKTGRS), Trp-525, Arg-532, and 559 to 564 (RPGSGY).

It belongs to the pyruvate kinase family. Homotetramer. Requires Mg(2+) as cofactor. Mn(2+) is required as a cofactor. It depends on K(+) as a cofactor.

The enzyme catalyses pyruvate + ATP = phosphoenolpyruvate + ADP + H(+). It participates in carbohydrate degradation; glycolysis; pyruvate from D-glyceraldehyde 3-phosphate: step 5/5. Allosterically activated by fructose 1,6-bisphosphate. Its function is as follows. Pyruvate kinase that catalyzes the conversion of phosphoenolpyruvate to pyruvate with the synthesis of ATP, and which plays a key role in glycolysis. This is Pyruvate kinase PKLR (Pklr) from Rattus norvegicus (Rat).